Reading from the N-terminus, the 715-residue chain is Formate dehydrogenase H (715 aa).

A 4Fe-4S Mo/W bis-MGD-type domain is found at 1 to 56 (MKKVVTVCPYCASGCKINLVVDNGKIVRAEAAQGKTNQGTLCLKGYYGWDFINDTQ). [4Fe-4S] cluster is bound by residues Cys8, Cys11, Cys15, and Cys42. Catalysis depends on Lys44, which acts as the Electron donor/acceptor. Residues Arg110, Sec140, Asn176, Asp179, Ser180, Cys201, Asp202, Arg204, Gly221, Asn223, Met297, Gln335, Asp404, Thr408, Gln428, Asp429, Ser445, Asp478, Arg581, Glu582, His585, Ser587, Tyr678, and Lys679 each coordinate Mo-bis(molybdopterin guanine dinucleotide). Residue Sec140 is the Proton donor/acceptor of the active site. Residue Sec140 is a non-standard amino acid, selenocysteine.

It belongs to the prokaryotic molybdopterin-containing oxidoreductase family. In terms of assembly, consists of two separable enzymatic activities: a formate dehydrogenase component (FDH-H) and hydrogenase-3. It depends on [4Fe-4S] cluster as a cofactor. The cofactor is Mo-bis(molybdopterin guanine dinucleotide).

It catalyses the reaction formate + A + H(+) = AH2 + CO2. Its activity is regulated as follows. Inhibited by aerobic conditions. In terms of biological role, decomposes formic acid to hydrogen and carbon dioxide under anaerobic conditions in the absence of exogenous electron acceptors. This Escherichia coli (strain K12) protein is Formate dehydrogenase H (fdhF).